The following is a 258-amino-acid chain: Cholera enterotoxin subunit A (258 aa).

The signal sequence occupies residues 1-18 (MVKIIFVFFIFLSSFSYA). NAD(+) contacts are provided by residues 25–28 (RADS) and 41–43 (MPR). Residue Glu130 is part of the active site. An intrachain disulfide couples Cys205 to Cys217.

It belongs to the enterotoxin A family. As to quaternary structure, the holotoxin (choleragen) consists of a pentameric ring of B subunits whose central pore is occupied by the A subunit. The A subunit contains two chains, A1 and A2, linked by a disulfide bridge. Interaction with the host protein ARF6 causes a conformation change so that the enterotoxin subunit A1 can bind NAD and catalyze the ADP-ribosylation of the host Gs alpha.

Its function is as follows. The A1 chain catalyzes the ADP-ribosylation of Gs alpha, a GTP-binding regulatory protein, to activate the adenylate cyclase. This leads to an overproduction of cAMP and eventually to a hypersecretion of chloride and bicarbonate followed by water, resulting in the characteristic cholera stool. The A2 chain tethers A1 to the pentameric ring. The polypeptide is Cholera enterotoxin subunit A (ctxA) (Vibrio cholerae serotype O1 (strain ATCC 39315 / El Tor Inaba N16961)).